The chain runs to 79 residues: Acyl carrier protein (79 aa).

Positions 2-77 (SDIEARVRKI…HAIDYIKSNA (76 aa)) constitute a Carrier domain. Position 37 is an O-(pantetheine 4'-phosphoryl)serine (S37).

Belongs to the acyl carrier protein (ACP) family. 4'-phosphopantetheine is transferred from CoA to a specific serine of apo-ACP by AcpS. This modification is essential for activity because fatty acids are bound in thioester linkage to the sulfhydryl of the prosthetic group.

It is found in the cytoplasm. It participates in lipid metabolism; fatty acid biosynthesis. Functionally, carrier of the growing fatty acid chain in fatty acid biosynthesis. This is Acyl carrier protein from Xylella fastidiosa (strain M23).